We begin with the raw amino-acid sequence, 501 residues long: MDHFKQLEVWFVIGSQHLYGPETLRQVKENAEKVVTGLNQQANLPVKLVLKPLVKTPDEILALCRDANYQDNCIGLLTWLHTFSPAKMWIGGLSILSKPLLQFHTQFNAEVPWDTMDMDFMNLNQTAHGGREFGFIGARMRQAHQVVVGHWQDKNAHARIGKWMRVAAAIQESKQLKVARFGDNMREVAVTEGDKVGAQIQFGYSVSAWGLGDLTAVVDAVSKGDINALVDEYEASYQLTDAVKLNGANRQNLLDAAQIELGMKRFLEQGGYHAFTTDFENLYGLKQLPGLAVQRLMQQGYGFGGEGDWKTAALLRIMKVMASGLSGGTSFMEDYTYNFQNGNDLVVGSHMLEVCPTIAKEQKPILDAQYLGIGGKADPARLIFSTPAGPSLNASVIDMGDRFRMLVNLVDTIEQPHPLPKLPVARAIWKAQPSLDVAAEAWILAGGAHHTVFSQALDLEHMRLYAEMQNIELLVIDNETRLHEFKDALRWNEVYYKLCSR.

Glu306, Glu333, His350, and His450 together coordinate Mn(2+).

This sequence belongs to the arabinose isomerase family. In terms of assembly, homohexamer. It depends on Mn(2+) as a cofactor.

It catalyses the reaction beta-L-arabinopyranose = L-ribulose. It functions in the pathway carbohydrate degradation; L-arabinose degradation via L-ribulose; D-xylulose 5-phosphate from L-arabinose (bacterial route): step 1/3. Its function is as follows. Catalyzes the conversion of L-arabinose to L-ribulose. This is L-arabinose isomerase from Pectobacterium carotovorum subsp. carotovorum (strain PC1).